We begin with the raw amino-acid sequence, 465 residues long: Cysteine--tRNA ligase (465 aa).

Residue Cys-29 participates in Zn(2+) binding. The short motif at 31 to 41 (PTVYNYIHIGN) is the 'HIGH' region element. Zn(2+) is bound by residues Cys-209, His-234, and Glu-238. Positions 266 to 270 (KMSKS) match the 'KMSKS' region motif. Lys-269 lines the ATP pocket. Ser-270 is modified (phosphoserine).

This sequence belongs to the class-I aminoacyl-tRNA synthetase family. In terms of assembly, monomer. It depends on Zn(2+) as a cofactor.

Its subcellular location is the cytoplasm. It catalyses the reaction tRNA(Cys) + L-cysteine + ATP = L-cysteinyl-tRNA(Cys) + AMP + diphosphate. This Anoxybacillus flavithermus (strain DSM 21510 / WK1) protein is Cysteine--tRNA ligase.